Consider the following 352-residue polypeptide: Uroporphyrinogen decarboxylase (352 aa).

Residues 27-31, Asp-77, Tyr-154, Thr-209, and His-325 each bind substrate; that span reads RQAGR.

This sequence belongs to the uroporphyrinogen decarboxylase family. As to quaternary structure, homodimer.

It is found in the cytoplasm. It catalyses the reaction uroporphyrinogen III + 4 H(+) = coproporphyrinogen III + 4 CO2. It functions in the pathway porphyrin-containing compound metabolism; protoporphyrin-IX biosynthesis; coproporphyrinogen-III from 5-aminolevulinate: step 4/4. In terms of biological role, catalyzes the decarboxylation of four acetate groups of uroporphyrinogen-III to yield coproporphyrinogen-III. The polypeptide is Uroporphyrinogen decarboxylase (Legionella pneumophila (strain Lens)).